The following is a 514-amino-acid chain: MSSNRQAYYKNNAKEQIGKEKRNEEVVSIRKDKREEAISKRRNINTQIEDDSETSTTPPGPFDANLLRLTVAAAQSSDPAEQLTAVQQARKMLSTDRNPPIDDLIGSGILPVLVQCLSSTDPNLQFEAAWALTNIASGTSEQTQAVVNAGAVPLFLQLLSCGNLNVCEQSVWALGNIIGDGPHFRDYCLELGILQPLLQFINPEIPIGFLRNVTWVIVNLCRCKDPAPSPAVVRTILPALSLLIHHQDTNILIDTVWALSYLTDGGNEHIQMVIEAQVVTHLVPLLGHVDVKVQTAALRAVGNIVTGTDEQTQLVLDSGVLRFMPGLLAHYKEKINKEAVWFVSNITAGNQQQVQDVFDAGIMPMIIHLLDRGDFPTQKEAAWAISNVTISGRPNQVEQMVKLGVLRPFCAMLSCTDSQIIQVVLDGINNILKMAGEAAEQVTSEIEECGGLDKIENLQNHENEDIYKLAFEIIDNFFSSDDETGNVEGAQSSAFGGDVPPVPDAPNGGWNFGK.

The 51-residue stretch at 1–51 folds into the IBB domain; sequence MSSNRQAYYKNNAKEQIGKEKRNEEVVSIRKDKREEAISKRRNINTQIEDD. A disordered region spans residues 1 to 62; sequence MSSNRQAYYK…ETSTTPPGPF (62 aa). Residues 12 to 39 are compositionally biased toward basic and acidic residues; that stretch reads NAKEQIGKEKRNEEVVSIRKDKREEAIS. ARM repeat units follow at residues 101–142, 143–187, 188–226, 227–271, 272–311, 312–353, 354–393, and 394–436; these read IDDL…TSEQ, TQAV…FRDY, CLEL…CKDP, APSP…EHIQ, MVIE…TDEQ, TQLV…NQQQ, VQDV…ISGR, and PNQV…KMAG. Residues 485 to 514 are disordered; that stretch reads GNVEGAQSSAFGGDVPPVPDAPNGGWNFGK.

This sequence belongs to the importin alpha family. In terms of assembly, forms a complex with an importin beta subunit. May interact with transcription factor cebp-1 (via N-terminus). Interacts with cmk-1; affinity for cmk-1 is increased in the presence of Ca(2+) and calmodulin and leads to increased nuclear accumulation of cmk-1 in FLP neurons upon prolonged heat activation. Expressed in larval and adult germline and somatic tissues, including neurons.

Its subcellular location is the cytoplasm. The protein resides in the nucleus. Functionally, binds specifically and directly to substrates containing either a simple or bipartite NLS motif. Promotes docking of import substrates to the nuclear envelope. Seems to act as a cytosolic receptor for both simple and bipartite NLS motifs. Necessary for correct nucleoporin localization within the germline. Essential gene for embryonic and larval development. May be dispensable for axon development, but required for axon regeneration in both mechanosensory and motor neurons. Required for oogenic development, ima-1 and ima-2 cannot functionally compensate for loss of ima-3. The protein is Importin subunit alpha-3 (ima-3) of Caenorhabditis elegans.